A 306-amino-acid polypeptide reads, in one-letter code: Homoserine kinase (306 aa).

91–101 contributes to the ATP binding site; sequence PLARGLGSSAA.

It belongs to the GHMP kinase family. Homoserine kinase subfamily.

The protein localises to the cytoplasm. The enzyme catalyses L-homoserine + ATP = O-phospho-L-homoserine + ADP + H(+). Its pathway is amino-acid biosynthesis; L-threonine biosynthesis; L-threonine from L-aspartate: step 4/5. In terms of biological role, catalyzes the ATP-dependent phosphorylation of L-homoserine to L-homoserine phosphate. This chain is Homoserine kinase, found in Bacillus licheniformis (strain ATCC 14580 / DSM 13 / JCM 2505 / CCUG 7422 / NBRC 12200 / NCIMB 9375 / NCTC 10341 / NRRL NRS-1264 / Gibson 46).